The following is a 576-amino-acid chain: Beta-bisabolene synthase (576 aa).

5 residues coordinate (2E,6E)-farnesyl diphosphate: Arg-286, Asp-323, Asp-327, Arg-466, and Asn-469. Residues Asp-323 and Asp-327 each contribute to the Mg(2+) site. A DDXXD motif motif is present at residues 323–327; it reads DDVYD. Mg(2+) is bound by residues Asn-469, Thr-473, and Glu-477.

Belongs to the terpene synthase family. Tpsb subfamily. Requires Mg(2+) as cofactor. The cofactor is Mn(2+).

In terms of biological role, produces almost exclusively beta-bisabolene and only traces of alpha-bisabolol from (2E,6E)-farnesyl diphosphate in fragrance biosynthesis. The protein is Beta-bisabolene synthase of Santalum austrocaledonicum (Sandalwood).